We begin with the raw amino-acid sequence, 432 residues long: Phosphomethylpyrimidine synthase (432 aa).

Substrate is bound by residues N66, M95, Y124, H163, S185–G187, D226–R229, and E265. Residue H269 coordinates Zn(2+). Y292 is a binding site for substrate. A Zn(2+)-binding site is contributed by H333. Positions 409, 412, and 416 each coordinate [4Fe-4S] cluster.

This sequence belongs to the ThiC family. [4Fe-4S] cluster serves as cofactor.

The catalysed reaction is 5-amino-1-(5-phospho-beta-D-ribosyl)imidazole + S-adenosyl-L-methionine = 4-amino-2-methyl-5-(phosphooxymethyl)pyrimidine + CO + 5'-deoxyadenosine + formate + L-methionine + 3 H(+). The protein operates within cofactor biosynthesis; thiamine diphosphate biosynthesis. In terms of biological role, catalyzes the synthesis of the hydroxymethylpyrimidine phosphate (HMP-P) moiety of thiamine from aminoimidazole ribotide (AIR) in a radical S-adenosyl-L-methionine (SAM)-dependent reaction. The sequence is that of Phosphomethylpyrimidine synthase from Desulforudis audaxviator (strain MP104C).